A 232-amino-acid polypeptide reads, in one-letter code: Replicative helicase loading/DNA remodeling protein DnaD (232 aa).

The N-terminal domain stretch occupies residues 1–98; the sequence is MKKQQFIDMQ…QNGIKFEKYS (98 aa). The tract at residues 1-116 is DDBH1; sequence MKKQQFIDMQ…YEYIQLAQNQ (116 aa). A C-terminal domain region spans residues 99 to 205; that stretch reads LQPLWGKLYE…VEQAKIHSQK (107 aa). A DDBH2 region spans residues 131 to 200; sequence TIFEEEFARP…NGLKTVEQAK (70 aa). The tract at residues 206–232 is C-terminal tail; sequence FRRVQAKQNEPQKEYKRQVPFYNWLEQ.

The protein belongs to the DnaB/DnaD family. The DNA replisome assembles sequentially on oriC in this order; DnaA, DnaD, DnaB, DnaI-DnaC helicase. Homodimer. Homotetramer. Oligomerization in vitro is concentration dependent. Part of the replication restart primosome which assembles in this order; PriA, DnaD then DnaB. The preferred DNA substrate mimics an arrested DNA replication fork with unreplicated lagging strand. Interacts with DnaA, DnaB and PriA. Interaction with DnaB requires DnaD to dimerize.

The protein resides in the cytoplasm. With respect to regulation, recruitment to oriC requires DnaA but not DnaB, DnaC or DnaI and is blocked by SirA. Its function is as follows. Required to load replicative helicase DnaC onto replication forks. Binds to a DnaD recognition element (DRE) which has pairs of 5'-TnnT-3' motifs; there is a strong DRE at oriC opposite the DnaA-trios recognized by DnaA. During DNA replication from the origin of replication (oriC) in the DNA replisome, DnaD is required after DnaA, before DnaB and subsequent helicase DnaC loading. A component of the replication restart primosome, which reloads the replicative helicase on sites other than oriC. DnaB, DnaD and DnaI may also be required for a PriA-independent pathway of replication fork restart. DnaB and DnaD work together to allow DnaB access to single-stranded (ss)DNA. Has DNA remodeling activity that converts supercoiled plasmid into an open circular form; DnaD forms scaffolds inside the plasmid DNA. Plasmid relaxation incorporates both wrapping around the DnaD protein scaffold and simultaneous untwisting, no nicking of the DNA is seen. Also converts linear DNA into an open circular form. Disrupts a replicative helicase-DnaI complex. Inhibits the ability of DnaA-ATP to form a helix on DNA; does not disassemble preformed helices in vitro. Binds ssDNA, and replication fork-like substrates, supercoiled plasmid, but not stably to short double-stranded (ds)DNA. DnaD stimulates DnaB DNA-binding activities. DnaB and DnaD are required to load helicase on the repN plasmid origin of replication (oriN). Causes a severe growth defect upon overexpression even in an oriC-independent strain. The chain is Replicative helicase loading/DNA remodeling protein DnaD from Bacillus subtilis (strain 168).